The following is a 1157-amino-acid chain: Pesticidal crystal protein Cry9Ca (1157 aa).

This sequence belongs to the delta endotoxin family.

Its function is as follows. Promotes colloidosmotic lysis by binding to the midgut epithelial cells of Lepidoptera larvae. Has a fairly broad spectrum of activity against members of the Pyralidae, Plutellidae, Sphingidae and Noctuidae families. It was the first insecticidal crystal protein characterized with activity against cutworms. No activity is observed against some beetles, such as the Colorado potato beetle. The protein is Pesticidal crystal protein Cry9Ca (cry9Ca) of Bacillus thuringiensis subsp. tolworthi.